A 584-amino-acid polypeptide reads, in one-letter code: Protein phosphatase 2A scaffold subunit (584 aa).

HEAT repeat units follow at residues 7-45, 46-84, 86-123, 168-206, 207-239, 240-278, 279-317, 318-356, 358-395, 397-434, 441-479, 480-512, 513-551, and 553-584; these read ESDDYHPIVILIDELKNEDIQLRLNSIKKLQSIAKALGP, ERTRTELIPYLQDSVLEDEDEVLVVLSEELGNLIEFVGG, EHAVCLLPPLQILAGAEELVVREKAVESLCKIAKEIPT, LRKTFGGLCHDDTPMVKRAAATNLGSFAKQIEKESVKSE, ILPLFQSLSTDEQDSVRLLGVENCALLGSMLTN, EENIQFILPTIKASSLDKSWRVRYMVARLLKELCESMGT, EITKTELIGAFVKLLKDTEAEVRTEASLRIADVCSLLTK, EMNIKTILPCVKDLVSDSSQHVRAALAQVIMSLAPIYGK, DTLTHLLELFLHLLKDDFPDVRLNIISKLDQVSKVIGI, MLSQSLLPAIVELAEDHQWRVRLAIIDYIPLLASQLGV, LGNLCMTWLGDPVFSIREAATNNLKKLTEVFGVDWAKNN, IIPKVLSLHSHPNYLYRMTTLFSISTLSTVVGG, DVISSSMVPLLAKMVSDKVPNIRFNVAKTFQTIIPLLDS, and IVQSRVKPLLVKLHEDTDKDVKFYASQALQLC.

This sequence belongs to the phosphatase 2A regulatory subunit A family. Component of the Sca1 complex composed of at least gefA, gefH, scaA, phr, and the protein phosphatase 2A subunits pppA and pho2B.

Its subcellular location is the cytoplasm. The protein localises to the cytosol. It localises to the cell membrane. Its function is as follows. Scaffolding molecule which may coordinate the assembly of the catalytic subunit and a variable regulatory B subunit. Component of the Sca1 complex, a regulator of cell motility, chemotaxis and signal relay. The Sca1 complex is recruited to the plasma membrane in a chemoattractant- and F-actin-dependent manner and is enriched at the leading edge of chemotaxing cells where it regulates F-actin dynamics and signal relay by controlling the activation of rasC and the downstream target of rapamycin complex 2 (TORC2)-Akt/protein kinase B (PKB) pathway. The polypeptide is Protein phosphatase 2A scaffold subunit (pppA) (Dictyostelium discoideum (Social amoeba)).